We begin with the raw amino-acid sequence, 496 residues long: Probable cytosol aminopeptidase (496 aa).

2 residues coordinate Mn(2+): lysine 266 and aspartate 271. Residue lysine 278 is part of the active site. Mn(2+)-binding residues include aspartate 289, aspartate 348, and glutamate 350. Arginine 352 is an active-site residue.

The protein belongs to the peptidase M17 family. Mn(2+) serves as cofactor.

The protein resides in the cytoplasm. The catalysed reaction is Release of an N-terminal amino acid, Xaa-|-Yaa-, in which Xaa is preferably Leu, but may be other amino acids including Pro although not Arg or Lys, and Yaa may be Pro. Amino acid amides and methyl esters are also readily hydrolyzed, but rates on arylamides are exceedingly low.. It catalyses the reaction Release of an N-terminal amino acid, preferentially leucine, but not glutamic or aspartic acids.. Functionally, presumably involved in the processing and regular turnover of intracellular proteins. Catalyzes the removal of unsubstituted N-terminal amino acids from various peptides. In Pseudomonas fluorescens (strain SBW25), this protein is Probable cytosol aminopeptidase.